The primary structure comprises 327 residues: MDVTHTPVLTERVIQLLDPALRRPGAVVVDATVGLGGHSHALLEAFPQVRLIGLDRDTTALEHSRRRLTGLGDRVDLEHAVYDQLPDVLDRLGVPSVDGVLFDLGVSSMQLDLDERGFAYSRDAPLDMRMDQERGPTAADVLNNYDVDALTRVLREYGEERFARRIARAVVTQRQAAPFTTSARLVDLVRDSIPAAARRTGGNPAKRTFQALRIEVNSELEVLERAVPAAFDALAVAGRLVVLSYHSLEDRLVKRVLMPRSVPSVPPDMPVIPDDARPTLRWLTRGAEPASDTEIEQNARAGSVRLRAAERTAAEPGRAHNPTGGVR.

Residues 36-38, Asp-55, Leu-89, Asp-103, and Gln-110 each bind S-adenosyl-L-methionine; that span reads GGH. The interval 286-327 is disordered; it reads GAEPASDTEIEQNARAGSVRLRAAERTAAEPGRAHNPTGGVR.

It belongs to the methyltransferase superfamily. RsmH family.

It localises to the cytoplasm. The catalysed reaction is cytidine(1402) in 16S rRNA + S-adenosyl-L-methionine = N(4)-methylcytidine(1402) in 16S rRNA + S-adenosyl-L-homocysteine + H(+). Functionally, specifically methylates the N4 position of cytidine in position 1402 (C1402) of 16S rRNA. The sequence is that of Ribosomal RNA small subunit methyltransferase H from Parafrankia sp. (strain EAN1pec).